The primary structure comprises 500 residues: Na(+)/H(+) antiporter NhaB (500 aa).

The next 11 membrane-spanning stretches (helical) occupy residues 23–43 (VVIC…GPVA), 53–73 (IFTL…LLLI), 96–116 (VILL…LLLF), 129–149 (AILA…LDAL), 150–170 (TVTA…HRVA), 205–225 (LLMH…VGEP), 238–258 (FVDF…AGLV), 311–331 (ILII…LMVI), 350–370 (FQDA…VAVI), 450–470 (ATPN…APLI), and 477–497 (MVWM…WAVT).

Belongs to the NhaB Na(+)/H(+) (TC 2.A.34) antiporter family.

It localises to the cell inner membrane. It catalyses the reaction 2 Na(+)(in) + 3 H(+)(out) = 2 Na(+)(out) + 3 H(+)(in). Functionally, na(+)/H(+) antiporter that extrudes sodium in exchange for external protons. This Pseudomonas putida (strain ATCC 47054 / DSM 6125 / CFBP 8728 / NCIMB 11950 / KT2440) protein is Na(+)/H(+) antiporter NhaB.